The chain runs to 316 residues: Pantothenate kinase (316 aa).

95 to 102 (GSVAVGKS) is a binding site for ATP.

The protein belongs to the prokaryotic pantothenate kinase family.

It is found in the cytoplasm. It catalyses the reaction (R)-pantothenate + ATP = (R)-4'-phosphopantothenate + ADP + H(+). It participates in cofactor biosynthesis; coenzyme A biosynthesis; CoA from (R)-pantothenate: step 1/5. This is Pantothenate kinase from Cronobacter sakazakii (strain ATCC BAA-894) (Enterobacter sakazakii).